Here is a 220-residue protein sequence, read N- to C-terminus: Imidazoleglycerol-phosphate dehydratase (220 aa).

It belongs to the imidazoleglycerol-phosphate dehydratase family.

It carries out the reaction D-erythro-1-(imidazol-4-yl)glycerol 3-phosphate = 3-(imidazol-4-yl)-2-oxopropyl phosphate + H2O. The protein operates within amino-acid biosynthesis; L-histidine biosynthesis; L-histidine from 5-phospho-alpha-D-ribose 1-diphosphate: step 6/9. This chain is Imidazoleglycerol-phosphate dehydratase (HIS3), found in Eremothecium gossypii (strain ATCC 10895 / CBS 109.51 / FGSC 9923 / NRRL Y-1056) (Yeast).